A 514-amino-acid polypeptide reads, in one-letter code: ATP synthase subunit alpha (514 aa).

Position 170–177 (170–177) interacts with ATP; the sequence is GDRQIGKT.

Belongs to the ATPase alpha/beta chains family. In terms of assembly, F-type ATPases have 2 components, CF(1) - the catalytic core - and CF(0) - the membrane proton channel. CF(1) has five subunits: alpha(3), beta(3), gamma(1), delta(1), epsilon(1). CF(0) has three main subunits: a(1), b(2) and c(9-12). The alpha and beta chains form an alternating ring which encloses part of the gamma chain. CF(1) is attached to CF(0) by a central stalk formed by the gamma and epsilon chains, while a peripheral stalk is formed by the delta and b chains.

It is found in the cell inner membrane. The enzyme catalyses ATP + H2O + 4 H(+)(in) = ADP + phosphate + 5 H(+)(out). In terms of biological role, produces ATP from ADP in the presence of a proton gradient across the membrane. The alpha chain is a regulatory subunit. This is ATP synthase subunit alpha from Pseudomonas entomophila (strain L48).